The primary structure comprises 128 residues: MLFSHIVFVALSVFGLVQAIPSPLAKEGVVERATNADVTGVLNTLKGRTDTILPQINALVASGNVNDRNVKPLFDQLSSALKTADASLGKFKAQGSLAGKTRTRSLLLVPTSSRTSTPLSRRSPSTSR.

The signal sequence occupies residues 1-19; the sequence is MLFSHIVFVALSVFGLVQA.

In terms of biological role, plays a role in the regulation of fruiting body development. This is Fruiting body differentiation protein 16 from Flammulina velutipes (Agaricus velutipes).